The chain runs to 339 residues: tRNA N6-adenosine threonylcarbamoyltransferase (339 aa).

Fe cation is bound by residues His114 and His118. Substrate contacts are provided by residues 137-141 (VVSGG), Asp170, Gly183, Asp187, and Asn277. Asp305 is a Fe cation binding site.

The protein belongs to the KAE1 / TsaD family. Requires Fe(2+) as cofactor.

Its subcellular location is the cytoplasm. The catalysed reaction is L-threonylcarbamoyladenylate + adenosine(37) in tRNA = N(6)-L-threonylcarbamoyladenosine(37) in tRNA + AMP + H(+). Functionally, required for the formation of a threonylcarbamoyl group on adenosine at position 37 (t(6)A37) in tRNAs that read codons beginning with adenine. Is involved in the transfer of the threonylcarbamoyl moiety of threonylcarbamoyl-AMP (TC-AMP) to the N6 group of A37, together with TsaE and TsaB. TsaD likely plays a direct catalytic role in this reaction. This is tRNA N6-adenosine threonylcarbamoyltransferase from Clostridium perfringens (strain SM101 / Type A).